Consider the following 696-residue polypeptide: MTKLGWGRRVVWGAALAAVAMLGACNGDESAERNRLPGFVSGSVRTTAYDGASDDLLTAGLGKTGLAAATAPGFANPSRPTSAELRRLAIWSNYRALVDMSANGGYGRFWGPNVDLDGNDTLGEGKIPGTEYLAYADDGSGSKNVTLLVQVPASFNPAQPCIVTATSSGSRGVYGAISAAGEWALKRGCAVAYNDKGGGNGAHELGSDTVTLIDGTLANAVLAGTASLFTANVTSGDLAAFNSRFPNRYAFKHAHSQQNPEQDWGRVTLQSVEFAYWALNEQFGPVIDGARHGVRYRAGDITTIAASVSNGGGASLAAAEQDNRGWITAVVVGEPQINVRMAPNAVVRAGGQPVPSFGRPLADYATLANLLEPCAAASASLAGAPYLSALPATTTQSIRTQRCATLAAAGLVAGADTQSQAADALAQLHAAGYLADSDLLQAPMWDSQAIPAIAVTYANAYTRSRVTDNLCNFSFATTNPATGVVAAPAASPMPSVFGVGNGVPPTAGINLVFNDGAGTDHRLATPDASFAGALCLRQLWTNGMLGMPANVDAVRVNANLHGKPAIIVQGRSDALVPVNHASRAYVAQNGISEAGRSQLVFYEVTNGQHFDAFLSVPGFDTRFVPVHYYNVQALNLMWRHLKNGAPLPPSQVIRTVPRGGTPGAAPALTSANLPPISTAPGANAIATGVGTIDVPL.

Residues 1–26 (MTKLGWGRRVVWGAALAAVAMLGACN) form the signal peptide. Ser-309 functions as the Charge relay system in the catalytic mechanism.

Belongs to the D-(-)-3-hydroxybutyrate oligomer hydrolase family.

It localises to the secreted. It carries out the reaction (3R)-hydroxybutanoate dimer + H2O = 2 (R)-3-hydroxybutanoate + H(+). The protein operates within lipid metabolism; butanoate metabolism. In terms of biological role, participates in the degradation of poly-3-hydroxybutyrate (PHB). It works downstream of poly(3-hydroxybutyrate) depolymerase, hydrolyzing D(-)-3-hydroxybutyrate oligomers of various length (3HB-oligomers) into 3HB-monomers. This Burkholderia cenocepacia (strain HI2424) protein is D-(-)-3-hydroxybutyrate oligomer hydrolase.